The chain runs to 266 residues: Imidazole glycerol phosphate synthase subunit HisF (266 aa).

Residues Asp11 and Asp130 contribute to the active site.

This sequence belongs to the HisA/HisF family. As to quaternary structure, heterodimer of HisH and HisF.

It localises to the cytoplasm. The catalysed reaction is 5-[(5-phospho-1-deoxy-D-ribulos-1-ylimino)methylamino]-1-(5-phospho-beta-D-ribosyl)imidazole-4-carboxamide + L-glutamine = D-erythro-1-(imidazol-4-yl)glycerol 3-phosphate + 5-amino-1-(5-phospho-beta-D-ribosyl)imidazole-4-carboxamide + L-glutamate + H(+). The protein operates within amino-acid biosynthesis; L-histidine biosynthesis; L-histidine from 5-phospho-alpha-D-ribose 1-diphosphate: step 5/9. Functionally, IGPS catalyzes the conversion of PRFAR and glutamine to IGP, AICAR and glutamate. The HisF subunit catalyzes the cyclization activity that produces IGP and AICAR from PRFAR using the ammonia provided by the HisH subunit. The protein is Imidazole glycerol phosphate synthase subunit HisF of Nitrosopumilus maritimus (strain SCM1).